The primary structure comprises 172 residues: uncharacterized protein (172 aa).

A helical membrane pass occupies residues 109–129; the sequence is MLLLYLYYNLLLLTASTPLTF.

The protein resides in the membrane. This is an uncharacterized protein from Saccharomyces cerevisiae (strain ATCC 204508 / S288c) (Baker's yeast).